The primary structure comprises 377 residues: F-box protein At4g00755 (377 aa).

One can recognise an F-box domain in the interval 7–47 (LDTDTSLSILSCLDDPSDIVRASAVSRSWRQFVVKYSLSKN).

This Arabidopsis thaliana (Mouse-ear cress) protein is F-box protein At4g00755.